The chain runs to 274 residues: Triosephosphate isomerase (274 aa).

A substrate-binding site is contributed by 13 to 15; that stretch reads NWK. Histidine 98 (electrophile) is an active-site residue. The active-site Proton acceptor is glutamate 170. Substrate contacts are provided by glycine 176 and serine 216.

This sequence belongs to the triosephosphate isomerase family. Homodimer.

Its subcellular location is the cytoplasm. The catalysed reaction is D-glyceraldehyde 3-phosphate = dihydroxyacetone phosphate. It functions in the pathway carbohydrate biosynthesis; gluconeogenesis. The protein operates within carbohydrate degradation; glycolysis; D-glyceraldehyde 3-phosphate from glycerone phosphate: step 1/1. Its function is as follows. Involved in the gluconeogenesis. Catalyzes stereospecifically the conversion of dihydroxyacetone phosphate (DHAP) to D-glyceraldehyde-3-phosphate (G3P). The polypeptide is Triosephosphate isomerase (Aster yellows witches'-broom phytoplasma (strain AYWB)).